The chain runs to 72 residues: Arrestin-E (72 aa).

This sequence belongs to the arrestin family. In terms of tissue distribution, adrenal, cerebral cortex, heart, hypothalamus, intestine, liver, lung, pituitary, retina and testis.

This chain is Arrestin-E (Ear), found in Rattus norvegicus (Rat).